A 663-amino-acid polypeptide reads, in one-letter code: Cytochrome bo(3) ubiquinol oxidase subunit 1 (663 aa).

Residues 1 to 16 (MFGKLSLDAVPFHEPI) lie on the Periplasmic side of the membrane. The helical transmembrane segment at 17 to 35 (VMVTIAGIILGGLALVGLI) threads the bilayer. The Cytoplasmic segment spans residues 36–52 (TYFGKWTYLWKEWLTSV). The helical transmembrane segment at 53-80 (DHKRLGIMYIIVAIVMLLRGFADAIMMR) threads the bilayer. The ubiquinone-8 site is built by Arg-71 and Asp-75. The Periplasmic portion of the chain corresponds to 81–95 (SQQALASAGEAGFLP). The chain crosses the membrane as a helical span at residues 96–132 (PHHYDQIFTAHGVIMIFFVAMPFVIGLMNLVVPLQIG). His-98 contributes to the ubiquinone-8 binding site. His-106 is a binding site for heme b. Residues 133 to 137 (ARDVA) lie on the Cytoplasmic side of the membrane. The chain crosses the membrane as a helical span at residues 138-161 (FPFLNNLSFWFTVVGVILVNVSLG). Topologically, residues 162–184 (VGEFAQTGWLAYPPLSGIEYSPG) are periplasmic. Position 170 (Trp-170) interacts with heme b. A helical transmembrane segment spans residues 185–215 (VGVDYWIWSLQLSGIGTTLTGINFFVTILKM). Residues 216–224 (RAPGMTMFK) are Cytoplasmic-facing. A helical membrane pass occupies residues 225 to 260 (MPVFTWASLCANVLIIASFPILTVTVALLTLDRYLG). Topologically, residues 261-270 (THFFTNDMGG) are periplasmic. The chain crosses the membrane as a helical span at residues 271-307 (NMMMYINLIWAWGHPEVYILILPVFGVFSEIAATFSR). Residue His-284 coordinates Cu(2+). Positions 284–288 (HPEVY) form a cross-link, 1'-histidyl-3'-tyrosine (His-Tyr). Tyr-288 lines the Fe(II)-heme o pocket. Over 308–311 (KRLF) the chain is Cytoplasmic. The chain crosses the membrane as a helical span at residues 312–326 (GYTSLVWATVCITVL). Over 327–340 (SFIVWLHHFFTMGA) the chain is Periplasmic. Cu(2+) is bound by residues His-333 and His-334. The helical transmembrane segment at 341-369 (GANVNAFFGITTMIIAIPTGVKIFNWLFT) threads the bilayer. The Cytoplasmic portion of the chain corresponds to 370 to 377 (MYQGRIVF). A helical transmembrane segment spans residues 378–409 (HSAMLWTIGFIVTFSVGGMTGVLLAVPGADFV). Residues 410-412 (LHN) are Periplasmic-facing. Fe(II)-heme o-binding residues include His-411 and His-419. The helical transmembrane segment at 413 to 445 (SLFLIAHFHNVIIGGVVFGCFAGMTYWWPKAFG) threads the bilayer. His-421 is a binding site for heme b. At 446–448 (FKL) the chain is on the cytoplasmic side. A helical transmembrane segment spans residues 449-477 (NETWGKRAFWFWIIGFFVAFMPLYALGFM). Over 478–489 (GMTRRLSQQIDP) the chain is Periplasmic. Residues Arg-481 and Arg-482 each contribute to the heme b site. Residues 490-521 (QFHTMLMIAASGAVLIALGILCLVIQMYVSIR) form a helical membrane-spanning segment. Over 522-587 (DRDQNRDLTG…DHYEEIHMPK (66 aa)) the chain is Cytoplasmic. The helical transmembrane segment at 588–606 (NSGAGIVIAAFSTIFGFAM) threads the bilayer. The Periplasmic segment spans residues 607–613 (IWHIWWL). Residues 614-632 (AIVGFAGMIITWIVKSFDE) traverse the membrane as a helical segment. Topologically, residues 633–663 (DVDYYVPVAEIEKLENQHFDEITKAGLKNGN) are cytoplasmic.

The protein belongs to the heme-copper respiratory oxidase family. The cytochrome bo(3) ubiquinol oxidase complex is a heterooctamer of two A chains, two B chains, two C chains and two D chains. It depends on Cu(2+) as a cofactor. Heme b is required as a cofactor. Fe(II)-heme o serves as cofactor.

The protein resides in the cell inner membrane. The catalysed reaction is 2 a ubiquinol + O2 + n H(+)(in) = 2 a ubiquinone + 2 H2O + n H(+)(out). Functionally, cytochrome bo(3) ubiquinol oxidase is the terminal enzyme in the aerobic respiratory chain of E.coli that predominates when cells are grown at high aeration. Catalyzes the four-electron reduction of O2 to water, using a ubiquinol as a membrane soluble electron donor for molecular oxygen reduction; ubiquinol-8 is the natural substrate for E.coli. Has proton pump activity across the membrane in addition to electron transfer, pumping 2 protons/electron and generating a proton motive force. All the redox centers of this enzyme complex are located within the largest subunit, subunit I. Protons are probably pumped via D- and K- channels found in this subunit. This chain is Cytochrome bo(3) ubiquinol oxidase subunit 1 (cyoB), found in Escherichia coli O157:H7.